Here is a 446-residue protein sequence, read N- to C-terminus: Exodeoxyribonuclease 7 large subunit (446 aa).

Belongs to the XseA family. Heterooligomer composed of large and small subunits.

Its subcellular location is the cytoplasm. It carries out the reaction Exonucleolytic cleavage in either 5'- to 3'- or 3'- to 5'-direction to yield nucleoside 5'-phosphates.. Functionally, bidirectionally degrades single-stranded DNA into large acid-insoluble oligonucleotides, which are then degraded further into small acid-soluble oligonucleotides. This is Exodeoxyribonuclease 7 large subunit from Vibrio cholerae serotype O1 (strain ATCC 39541 / Classical Ogawa 395 / O395).